The chain runs to 305 residues: Phosphatidylglycerol--prolipoprotein diacylglyceryl transferase (305 aa).

3 helical membrane-spanning segments follow: residues 10–30, 59–79, and 92–112; these read FLIS…GAII, LMLG…AFEW, and LTTG…STVI. Arg-140 is an a 1,2-diacyl-sn-glycero-3-phospho-(1'-sn-glycerol) binding site. Helical transmembrane passes span 182-202 and 260-280; these read LFHP…GILL and IRVA…LIFL.

This sequence belongs to the Lgt family.

It is found in the cell membrane. It carries out the reaction L-cysteinyl-[prolipoprotein] + a 1,2-diacyl-sn-glycero-3-phospho-(1'-sn-glycerol) = an S-1,2-diacyl-sn-glyceryl-L-cysteinyl-[prolipoprotein] + sn-glycerol 1-phosphate + H(+). It functions in the pathway protein modification; lipoprotein biosynthesis (diacylglyceryl transfer). Its function is as follows. Catalyzes the transfer of the diacylglyceryl group from phosphatidylglycerol to the sulfhydryl group of the N-terminal cysteine of a prolipoprotein, the first step in the formation of mature lipoproteins. This Chloroflexus aggregans (strain MD-66 / DSM 9485) protein is Phosphatidylglycerol--prolipoprotein diacylglyceryl transferase.